The primary structure comprises 148 residues: Probable DNA-directed RNA polymerases I, II, and III subunit RPABC3 (148 aa).

The tract at residues 16–40 (DPDGKKFDRVSRYFCDAESFKMELI) is non-specific ssDNA binding.

This sequence belongs to the eukaryotic RPB8 RNA polymerase subunit family. In terms of assembly, component of the RNA polymerase I (Pol I), RNA polymerase II (Pol II) and RNA polymerase III (Pol III) complexes consisting of at least 13, 12 and 17 subunits, respectively. Directly interacts with POLR2A.

It is found in the nucleus. In terms of biological role, DNA-dependent RNA polymerase catalyzes the transcription of DNA into RNA using the four ribonucleoside triphosphates as substrates. Common component of RNA polymerases I, II and III which synthesize ribosomal RNA precursors, mRNA precursors and many functional non-coding RNAs, and small RNAs, such as 5S rRNA and tRNAs, respectively. This is Probable DNA-directed RNA polymerases I, II, and III subunit RPABC3 (rpb-8) from Caenorhabditis elegans.